A 166-amino-acid chain; its full sequence is NADPH-dependent 7-cyano-7-deazaguanine reductase (166 aa).

C57 serves as the catalytic Thioimide intermediate. Residue D64 is the Proton donor of the active site. Substrate-binding positions include 79 to 81 (VES) and 98 to 99 (HE).

Belongs to the GTP cyclohydrolase I family. QueF type 1 subfamily.

The protein localises to the cytoplasm. It catalyses the reaction 7-aminomethyl-7-carbaguanine + 2 NADP(+) = 7-cyano-7-deazaguanine + 2 NADPH + 3 H(+). Its pathway is tRNA modification; tRNA-queuosine biosynthesis. In terms of biological role, catalyzes the NADPH-dependent reduction of 7-cyano-7-deazaguanine (preQ0) to 7-aminomethyl-7-deazaguanine (preQ1). The polypeptide is NADPH-dependent 7-cyano-7-deazaguanine reductase (Staphylococcus haemolyticus (strain JCSC1435)).